The following is a 106-amino-acid chain: Envelope small membrane protein (106 aa).

Topologically, residues 1–11 (MMNLLNTSLEE) are virion surface. Residues 12–32 (NGSFLTALYVICEFVALYLLG) form a helical membrane-spanning segment. The Intravirion portion of the chain corresponds to 33–106 (RALQAFVQAA…ANFQNGKLHT (74 aa)).

The protein belongs to the gammacoronaviruses E protein family. Homooligomer. Interacts with the M membrane protein in the budding compartment of the host cell, which is located between endoplasmic reticulum and the Golgi complex. The cytoplasmic tails of both proteins are important for this function. Interacts with Nucleoprotein.

The protein resides in the host Golgi apparatus membrane. Its function is as follows. Plays a central role in virus morphogenesis and assembly. Acts as a viroporin and self-assembles in host membranes forming pentameric protein-lipid pores that allow ion transport. Also plays a role in the induction of apoptosis. This Gallus gallus (Chicken) protein is Envelope small membrane protein.